The sequence spans 54 residues: Metallothionein-4 (54 aa).

Belongs to the metallothionein superfamily. Type 11 family.

In Yarrowia lipolytica (strain CLIB 122 / E 150) (Yeast), this protein is Metallothionein-4 (MTP4).